The following is a 57-amino-acid chain: Large ribosomal subunit protein bL32 (57 aa).

Residues 1 to 20 (MAVPKRRMSRSNTRSRRAQW) show a composition bias toward basic residues. The tract at residues 1–22 (MAVPKRRMSRSNTRSRRAQWKA) is disordered.

It belongs to the bacterial ribosomal protein bL32 family.

The polypeptide is Large ribosomal subunit protein bL32 (Mycobacterium sp. (strain JLS)).